Here is a 432-residue protein sequence, read N- to C-terminus: Serine--tRNA ligase (432 aa).

Residue 238–240 coordinates L-serine; sequence TAE. 269-271 lines the ATP pocket; it reads RSE. E292 provides a ligand contact to L-serine. ATP is bound at residue 357 to 360; sequence EISS. S393 is an L-serine binding site.

It belongs to the class-II aminoacyl-tRNA synthetase family. Type-1 seryl-tRNA synthetase subfamily. As to quaternary structure, homodimer. The tRNA molecule binds across the dimer.

It is found in the cytoplasm. The catalysed reaction is tRNA(Ser) + L-serine + ATP = L-seryl-tRNA(Ser) + AMP + diphosphate + H(+). It carries out the reaction tRNA(Sec) + L-serine + ATP = L-seryl-tRNA(Sec) + AMP + diphosphate + H(+). It participates in aminoacyl-tRNA biosynthesis; selenocysteinyl-tRNA(Sec) biosynthesis; L-seryl-tRNA(Sec) from L-serine and tRNA(Sec): step 1/1. Its function is as follows. Catalyzes the attachment of serine to tRNA(Ser). Is also able to aminoacylate tRNA(Sec) with serine, to form the misacylated tRNA L-seryl-tRNA(Sec), which will be further converted into selenocysteinyl-tRNA(Sec). This chain is Serine--tRNA ligase, found in Hyphomonas neptunium (strain ATCC 15444).